A 702-amino-acid chain; its full sequence is Elongation factor G (702 aa).

The 279-residue stretch at 8–286 folds into the tr-type G domain; that stretch reads DKVRNIGIIA…AVVEYLPSPL (279 aa). GTP is bound by residues 17-24, 85-89, and 139-142; these read AHIDAGKT, DTPGH, and NKMD.

Belongs to the TRAFAC class translation factor GTPase superfamily. Classic translation factor GTPase family. EF-G/EF-2 subfamily.

Its subcellular location is the cytoplasm. Catalyzes the GTP-dependent ribosomal translocation step during translation elongation. During this step, the ribosome changes from the pre-translocational (PRE) to the post-translocational (POST) state as the newly formed A-site-bound peptidyl-tRNA and P-site-bound deacylated tRNA move to the P and E sites, respectively. Catalyzes the coordinated movement of the two tRNA molecules, the mRNA and conformational changes in the ribosome. The polypeptide is Elongation factor G (Chloroflexus aggregans (strain MD-66 / DSM 9485)).